Reading from the N-terminus, the 656-residue chain is Protein terminal ear1 (656 aa).

The 73-residue stretch at 211 to 283 (SLVVLSPLPG…RRLVVEFTRP (73 aa)) folds into the RRM domain. Disordered regions lie at residues 280 to 408 (FTRP…WKGR) and 576 to 656 (LTDP…GYDD). Positions 288-299 (PRRRGYAPHQHR) are enriched in basic residues. The span at 314 to 331 (PSQPTSSQPPASSSSSGS) shows a compositional bias: low complexity. The span at 346 to 358 (CKSSAGSDQSSKG) shows a compositional bias: polar residues. Low complexity-rich tracts occupy residues 377 to 397 (AAAAASSSTPTASGKQTQKGV), 585 to 601 (RSPAASSASSPPKSRAA), and 612 to 630 (PAPSSSADGASSTTTSTHA). Residues 642-656 (DIRLAGELRRLGYDD) show a composition bias toward basic and acidic residues.

In terms of tissue distribution, expressed below the shoot tip down the flanks of shoot apex in an alternating pattern. Not expressed in root tips, leaves or immature ears (female inflorescences).

Probable RNA-binding protein. Involved in the regulation of leaf initiation rate and shoot development. Seems to act more predominantly in the early stages of the leaf development, rather than in the later phase. The sequence is that of Protein terminal ear1 (TE1) from Zea mays (Maize).